A 1465-amino-acid chain; its full sequence is DNA polymerase III PolC-type (1465 aa).

The 157-residue stretch at 427–583 (YVVFDVETTG…YDAEATGRLL (157 aa)) folds into the Exonuclease domain.

This sequence belongs to the DNA polymerase type-C family. PolC subfamily.

It localises to the cytoplasm. It catalyses the reaction DNA(n) + a 2'-deoxyribonucleoside 5'-triphosphate = DNA(n+1) + diphosphate. Required for replicative DNA synthesis. This DNA polymerase also exhibits 3' to 5' exonuclease activity. The protein is DNA polymerase III PolC-type of Streptococcus pyogenes serotype M6 (strain ATCC BAA-946 / MGAS10394).